Reading from the N-terminus, the 138-residue chain is Gamma-glutamylaminecyclotransferase (138 aa).

E63 serves as the catalytic Proton acceptor.

Belongs to the gamma-glutamylcyclotransferase family.

It carries out the reaction epsilon-(gamma-L-glutamyl)-L-lysine = 5-oxo-L-proline + L-lysine. In terms of biological role, may contribute to degradation of proteins cross-linked by transglutaminases by degrading the cross-link between a lysine and a glutamic acid residue. Catalyzes the formation of 5-oxo-L-proline from L-gamma-glutamyl-L-epsilon-lysine. The chain is Gamma-glutamylaminecyclotransferase (ggact) from Xenopus laevis (African clawed frog).